A 507-amino-acid chain; its full sequence is MSKKALLIICDGWGIGDKGKDDVIFNTPTPYWDELLKTYPASQLQASGENVGLPDGQMGNSEVGHLNIGAGRIVYQDLVKINIACRENTIMENPEIKRAYSYAKENNKQIHFMGLVSDGGVHSSLEHLLKLTDIAKEYGISKAYVHCFMDGRDTDPKSGKGFIEELENHLKTTGGKIASIIGRYYAMDRDKRWERVKEAYDLLVEGKGKQAECMVKAMEESYAEGVTDEFIKPIVHVENGKPVAVIEEGDVVIFFNYRNDRAKELTVVLTQQDMPEAGMHTIPGLQYFCMTPYDASFKGVHILFDKENVNNTLGEFLANVGKTQLHIAETEKYAHVTFFFNGGRETPFDSEERILVPSPKVATYDLKPEMSAFEVKDKLVDAINTKKFDFIVVNYANGDMVGHTGIYKAIEKAVVTIDACLHDTVEAAKANDYEVIIIADHGNADHALNEDGTPNTAHSLNPVPFVYVTANKDAKVEDGILADVAPSILHILGLKQPKEMTGKSLIK.

Mn(2+) is bound by residues aspartate 11 and serine 61. Catalysis depends on serine 61, which acts as the Phosphoserine intermediate. Substrate is bound by residues histidine 122, 152–153 (RD), arginine 183, arginine 189, 258–261 (RNDR), and lysine 332. Aspartate 399, histidine 403, aspartate 440, histidine 441, and histidine 458 together coordinate Mn(2+).

The protein belongs to the BPG-independent phosphoglycerate mutase family. Monomer. Mn(2+) serves as cofactor.

It catalyses the reaction (2R)-2-phosphoglycerate = (2R)-3-phosphoglycerate. It functions in the pathway carbohydrate degradation; glycolysis; pyruvate from D-glyceraldehyde 3-phosphate: step 3/5. Catalyzes the interconversion of 2-phosphoglycerate and 3-phosphoglycerate. The protein is 2,3-bisphosphoglycerate-independent phosphoglycerate mutase of Parabacteroides distasonis (strain ATCC 8503 / DSM 20701 / CIP 104284 / JCM 5825 / NCTC 11152).